Reading from the N-terminus, the 241-residue chain is Large ribosomal subunit protein eL32 (241 aa).

Residues 1–16 (MADNEEDVEAEEEYTE) are compositionally biased toward acidic residues. Disordered stretches follow at residues 1 to 47 (MADN…GADQ) and 68 to 182 (VGGL…HPSG). Residues 29–44 (ESLREAGFESVEDVRG) are compositionally biased toward basic and acidic residues. Residues 73–96 (VESETEAEVEEEGGEEAPDEDVET) show a composition bias toward acidic residues. The segment covering 103–116 (LTEKTPDLSDEDAR) has biased composition (basic and acidic residues). Over residues 133–159 (DHHKKKRVSTSWRKPRGQLSKQRRGIK) the composition is skewed to basic residues.

Belongs to the eukaryotic ribosomal protein eL32 family. In terms of assembly, part of the 50S ribosomal subunit. Interacts weakly with protein L15.

In terms of biological role, binds to the 23S rRNA. This is Large ribosomal subunit protein eL32 (rpl32e) from Haloarcula marismortui (strain ATCC 43049 / DSM 3752 / JCM 8966 / VKM B-1809) (Halobacterium marismortui).